The sequence spans 307 residues: Ribosomal RNA small subunit methyltransferase H (307 aa).

Residues 38 to 40 (GGH), Asp-58, Phe-82, Asp-99, and Gln-106 contribute to the S-adenosyl-L-methionine site.

It belongs to the methyltransferase superfamily. RsmH family.

Its subcellular location is the cytoplasm. The catalysed reaction is cytidine(1402) in 16S rRNA + S-adenosyl-L-methionine = N(4)-methylcytidine(1402) in 16S rRNA + S-adenosyl-L-homocysteine + H(+). Functionally, specifically methylates the N4 position of cytidine in position 1402 (C1402) of 16S rRNA. The protein is Ribosomal RNA small subunit methyltransferase H of Variovorax paradoxus (strain S110).